The chain runs to 136 residues: Nodulation protein K (136 aa).

The protein is Nodulation protein K (nodK) of Bradyrhizobium sp. (strain ANU 289).